Consider the following 112-residue polypeptide: Small ribosomal subunit protein bS6 (112 aa).

This sequence belongs to the bacterial ribosomal protein bS6 family.

In terms of biological role, binds together with bS18 to 16S ribosomal RNA. The polypeptide is Small ribosomal subunit protein bS6 (Chlamydia felis (strain Fe/C-56) (Chlamydophila felis)).